The following is a 444-amino-acid chain: Nuclear envelope integral membrane protein 1 (444 aa).

The first 43 residues, 1-43 (MAGGMKVAVSPAVGPGPWGSGVGGGGTVRLLLILSGCLVYGTA), serve as a signal peptide directing secretion. A glycan (N-linked (GlcNAc...) asparagine) is linked at asparagine 125. 5 helical membrane-spanning segments follow: residues 161 to 181 (PKLF…DLLS), 186 to 206 (FYYS…IIFI), 216 to 236 (PIYV…QLVF), 245 to 265 (CYWQ…FAVC), and 289 to 309 (LCFM…IIIA). Positions 186 to 297 (FYYSTGMSVG…GLCFMYSGIQ (112 aa)) are a; required for its colocalization with lamins at the nuclear envelope. Positions 336-405 (PVPPRLLTEE…LTPNEVSVHE (70 aa)) are b; required for interaction with RAN-GTP. Residues 336 to 444 (PVPPRLLTEE…PAITQNNFLT (109 aa)) form a required for nuclear localization region. Serine 368, serine 424, and serine 425 each carry phosphoserine.

The protein belongs to the NEMP family. In terms of assembly, homooligomer. Interacts with RAN-GTP. Interacts with EMD. In terms of processing, phosphorylation may regulate its interaction with RAN-GTP.

It is found in the nucleus inner membrane. Its subcellular location is the nucleus envelope. Together with EMD, contributes to nuclear envelope stiffness in germ cells. Required for female fertility. Essential for normal erythropoiesis. Required for efficient nuclear envelope opening and enucleation during the late stages of erythroblast maturation. This Pongo abelii (Sumatran orangutan) protein is Nuclear envelope integral membrane protein 1 (NEMP1).